The following is a 180-amino-acid chain: ATP-dependent protease subunit HslV (180 aa).

Thr-6 is a catalytic residue. Na(+) is bound by residues Ala-164, Cys-167, and Thr-170.

The protein belongs to the peptidase T1B family. HslV subfamily. A double ring-shaped homohexamer of HslV is capped on each side by a ring-shaped HslU homohexamer. The assembly of the HslU/HslV complex is dependent on binding of ATP.

The protein resides in the cytoplasm. The enzyme catalyses ATP-dependent cleavage of peptide bonds with broad specificity.. Allosterically activated by HslU binding. In terms of biological role, protease subunit of a proteasome-like degradation complex believed to be a general protein degrading machinery. The polypeptide is ATP-dependent protease subunit HslV (Borrelia duttonii (strain Ly)).